We begin with the raw amino-acid sequence, 553 residues long: Zinc finger protein 426 (553 aa).

Residues 40-111 (VSFDDVIVDF…KIVFPEWKIQ (72 aa)) enclose the KRAB domain. 11 consecutive C2H2-type zinc fingers follow at residues 222-244 (FECS…QRTH), 277-299 (HRCK…MRTH), 305-327 (YECK…GRTH), 333-355 (YVCN…VRSH), 361-383 (YACK…IRTH), 389-411 (FVCV…LKMH), 417-439 (CECK…MRTH), 445-467 (YTCK…MRIH), 473-495 (YECK…ERTH), 501-525 (YECK…SHTH), and 531-553 (YKCQ…ERIH).

It localises to the nucleus. Its function is as follows. May be involved in transcriptional regulation. The polypeptide is Zinc finger protein 426 (Znf426) (Rattus norvegicus (Rat)).